Reading from the N-terminus, the 404-residue chain is Rhomboid-related protein 3 (404 aa).

2 consecutive EF-hand domains span residues 34 to 69 (APED…HSSK) and 70 to 105 (LDPH…KRSN). Helical transmembrane passes span 164 to 184 (WFMI…GVLL), 227 to 247 (LGLN…VHGA), 250 to 270 (IGLV…VADM), 274 to 294 (VVGS…NIVM), 305 to 324 (LLRM…RAVW), 338 to 358 (PSFV…VVVL), and 371 to 391 (WWIF…WNIF). Residue S278 is the Nucleophile of the active site. H343 is an active-site residue.

Belongs to the peptidase S54 family.

The protein resides in the membrane. The catalysed reaction is Cleaves type-1 transmembrane domains using a catalytic dyad composed of serine and histidine that are contributed by different transmembrane domains.. Its function is as follows. May be involved in regulated intramembrane proteolysis and the subsequent release of functional polypeptides from their membrane anchors. The sequence is that of Rhomboid-related protein 3 (Rhbdl3) from Mus musculus (Mouse).